The following is a 392-amino-acid chain: MIIHSLLDTDLYKFTMMQAVLHQHPAAQVDYRFKCRTPGVDLAQFVDEISREIDALCRLRLREDEVDYLRSLRFIKPDFADFLALFHLDRKYLSLTASATHPGEIELTIRGPWLHTILFEVPLLAIINEVWFRNTSEPDFEEGRSRLREKVASLRSMPAGCKIADYGTRRRYSRQWHGELLPLLRDGLGEQFVGTSNVYFAKQYGLTPLGTMAHEYLQAFQALGPRLRDSQVAALESWAREYRGDLGIALSDVVGLDAFLRDFDLYFCKLFDGMRHDSGDPFEWGERVIAHLEAHRVDPRTKVLVFSDGLNIDKVMRLYQHFHTRCRLAFGVGTSLTNDLGPTPLQIVIKMVRCNGQPVAKLSDSPGKSMCEDIGYLRYLRDVFGLPPMAEG.

A Phosphohistidine; by autocatalysis modification is found at His-214.

Belongs to the NAPRTase family. Post-translationally, transiently phosphorylated on a His residue during the reaction cycle. Phosphorylation strongly increases the affinity for substrates and increases the rate of nicotinate D-ribonucleotide production. Dephosphorylation regenerates the low-affinity form of the enzyme, leading to product release.

The catalysed reaction is nicotinate + 5-phospho-alpha-D-ribose 1-diphosphate + ATP + H2O = nicotinate beta-D-ribonucleotide + ADP + phosphate + diphosphate. It participates in cofactor biosynthesis; NAD(+) biosynthesis; nicotinate D-ribonucleotide from nicotinate: step 1/1. Functionally, catalyzes the synthesis of beta-nicotinate D-ribonucleotide from nicotinate and 5-phospho-D-ribose 1-phosphate at the expense of ATP. In Xanthomonas euvesicatoria pv. vesicatoria (strain 85-10) (Xanthomonas campestris pv. vesicatoria), this protein is Nicotinate phosphoribosyltransferase.